A 535-amino-acid polypeptide reads, in one-letter code: Thermosome subunit gamma (535 aa).

The protein belongs to the TCP-1 chaperonin family. In terms of assembly, forms a heterooligomeric complex of two stacked nine-membered rings; one of alpha and the other of beta subunits.

The protein resides in the cytoplasm. The enzyme catalyses ATP + H2O = ADP + phosphate + H(+). In terms of biological role, molecular chaperone; binds unfolded polypeptides in vitro, and has a weak ATPase activity. In Saccharolobus shibatae (strain ATCC 51178 / DSM 5389 / JCM 8931 / NBRC 15437 / B12) (Sulfolobus shibatae), this protein is Thermosome subunit gamma (thsC).